Consider the following 204-residue polypeptide: Holliday junction branch migration complex subunit RuvA (204 aa).

The segment at 1–64 is domain I; it reads MIGRLRGIIL…EDAQLLYGFN (64 aa). A domain II region spans residues 65–142; that stretch reads NKQERALFRE…KGLNGDLFNN (78 aa). The tract at residues 143–155 is flexible linker; the sequence is TGDISLPTASPQT. The tract at residues 156 to 204 is domain III; sequence SDADIEAEAASALVALGYKPQEASRLVSKIAKPGADCETLIRDALRAAL.

It belongs to the RuvA family. Homotetramer. Forms an RuvA(8)-RuvB(12)-Holliday junction (HJ) complex. HJ DNA is sandwiched between 2 RuvA tetramers; dsDNA enters through RuvA and exits via RuvB. An RuvB hexamer assembles on each DNA strand where it exits the tetramer. Each RuvB hexamer is contacted by two RuvA subunits (via domain III) on 2 adjacent RuvB subunits; this complex drives branch migration. In the full resolvosome a probable DNA-RuvA(4)-RuvB(12)-RuvC(2) complex forms which resolves the HJ.

The protein resides in the cytoplasm. Functionally, the RuvA-RuvB-RuvC complex processes Holliday junction (HJ) DNA during genetic recombination and DNA repair, while the RuvA-RuvB complex plays an important role in the rescue of blocked DNA replication forks via replication fork reversal (RFR). RuvA specifically binds to HJ cruciform DNA, conferring on it an open structure. The RuvB hexamer acts as an ATP-dependent pump, pulling dsDNA into and through the RuvAB complex. HJ branch migration allows RuvC to scan DNA until it finds its consensus sequence, where it cleaves and resolves the cruciform DNA. This is Holliday junction branch migration complex subunit RuvA from Yersinia pseudotuberculosis serotype O:1b (strain IP 31758).